A 208-amino-acid polypeptide reads, in one-letter code: Large ribosomal subunit protein uL3 (208 aa).

Q149 carries the N5-methylglutamine modification.

Belongs to the universal ribosomal protein uL3 family. In terms of assembly, part of the 50S ribosomal subunit. Forms a cluster with proteins L14 and L19. In terms of processing, methylated by PrmB.

In terms of biological role, one of the primary rRNA binding proteins, it binds directly near the 3'-end of the 23S rRNA, where it nucleates assembly of the 50S subunit. The polypeptide is Large ribosomal subunit protein uL3 (Mannheimia succiniciproducens (strain KCTC 0769BP / MBEL55E)).